Here is a 443-residue protein sequence, read N- to C-terminus: Tubulin beta-1/beta-2 chain (443 aa).

8 residues coordinate GTP: glutamine 11, glutamate 69, serine 138, glycine 142, threonine 143, glycine 144, asparagine 204, and asparagine 226. Glutamate 69 contacts Mg(2+). The disordered stretch occupies residues 424–443 (QYQDASAEEEGEFEGEEEEA). Positions 429-443 (SAEEEGEFEGEEEEA) are enriched in acidic residues.

This sequence belongs to the tubulin family. In terms of assembly, dimer of alpha and beta chains. A typical microtubule is a hollow water-filled tube with an outer diameter of 25 nm and an inner diameter of 15 nM. Alpha-beta heterodimers associate head-to-tail to form protofilaments running lengthwise along the microtubule wall with the beta-tubulin subunit facing the microtubule plus end conferring a structural polarity. Microtubules usually have 13 protofilaments but different protofilament numbers can be found in some organisms and specialized cells. Mg(2+) serves as cofactor.

The protein localises to the cytoplasm. It is found in the cytoskeleton. In terms of biological role, tubulin is the major constituent of microtubules, a cylinder consisting of laterally associated linear protofilaments composed of alpha- and beta-tubulin heterodimers. Microtubules grow by the addition of GTP-tubulin dimers to the microtubule end, where a stabilizing cap forms. Below the cap, tubulin dimers are in GDP-bound state, owing to GTPase activity of alpha-tubulin. This chain is Tubulin beta-1/beta-2 chain (TUBB1), found in Chlamydomonas reinhardtii (Chlamydomonas smithii).